Here is a 213-residue protein sequence, read N- to C-terminus: ATP synthase subunit b 2 (213 aa).

Residues 1-45 (MFVTEAYAQSAPTVGETHTETPAVGQPQPEATHTETGVAHGAEHG) are disordered. A helical transmembrane segment spans residues 57 to 76 (TYASQVLWLAITFGLFYLLM).

Belongs to the ATPase B chain family. F-type ATPases have 2 components, F(1) - the catalytic core - and F(0) - the membrane proton channel. F(1) has five subunits: alpha(3), beta(3), gamma(1), delta(1), epsilon(1). F(0) has three main subunits: a(1), b(2) and c(10-14). The alpha and beta chains form an alternating ring which encloses part of the gamma chain. F(1) is attached to F(0) by a central stalk formed by the gamma and epsilon chains, while a peripheral stalk is formed by the delta and b chains.

The protein localises to the cell inner membrane. In terms of biological role, f(1)F(0) ATP synthase produces ATP from ADP in the presence of a proton or sodium gradient. F-type ATPases consist of two structural domains, F(1) containing the extramembraneous catalytic core and F(0) containing the membrane proton channel, linked together by a central stalk and a peripheral stalk. During catalysis, ATP synthesis in the catalytic domain of F(1) is coupled via a rotary mechanism of the central stalk subunits to proton translocation. Functionally, component of the F(0) channel, it forms part of the peripheral stalk, linking F(1) to F(0). The b'-subunit is a diverged and duplicated form of b found in plants and photosynthetic bacteria. The chain is ATP synthase subunit b 2 (atpF2) from Agrobacterium fabrum (strain C58 / ATCC 33970) (Agrobacterium tumefaciens (strain C58)).